Reading from the N-terminus, the 258-residue chain is Phosphoribosylaminoimidazole-succinocarboxamide synthase (258 aa).

This sequence belongs to the SAICAR synthetase family.

It carries out the reaction 5-amino-1-(5-phospho-D-ribosyl)imidazole-4-carboxylate + L-aspartate + ATP = (2S)-2-[5-amino-1-(5-phospho-beta-D-ribosyl)imidazole-4-carboxamido]succinate + ADP + phosphate + 2 H(+). The protein operates within purine metabolism; IMP biosynthesis via de novo pathway; 5-amino-1-(5-phospho-D-ribosyl)imidazole-4-carboxamide from 5-amino-1-(5-phospho-D-ribosyl)imidazole-4-carboxylate: step 1/2. This is Phosphoribosylaminoimidazole-succinocarboxamide synthase from Maricaulis maris (strain MCS10) (Caulobacter maris).